The chain runs to 415 residues: Gamma-glutamyl phosphate reductase (415 aa).

The protein belongs to the gamma-glutamyl phosphate reductase family.

The protein resides in the cytoplasm. It carries out the reaction L-glutamate 5-semialdehyde + phosphate + NADP(+) = L-glutamyl 5-phosphate + NADPH + H(+). It participates in amino-acid biosynthesis; L-proline biosynthesis; L-glutamate 5-semialdehyde from L-glutamate: step 2/2. Functionally, catalyzes the NADPH-dependent reduction of L-glutamate 5-phosphate into L-glutamate 5-semialdehyde and phosphate. The product spontaneously undergoes cyclization to form 1-pyrroline-5-carboxylate. This Mycolicibacterium gilvum (strain PYR-GCK) (Mycobacterium gilvum (strain PYR-GCK)) protein is Gamma-glutamyl phosphate reductase.